Consider the following 651-residue polypeptide: DNA endonuclease RBBP8 (651 aa).

Coiled-coil stretches lie at residues L35–L84 and I117–L138. Disordered stretches follow at residues L138–R199, N363–A433, and Y487–S539. The segment covering N363–T379 has biased composition (polar residues). The span at Q380 to T391 shows a compositional bias: basic and acidic residues. A compositionally biased stretch (acidic residues) spans V503–E515. Residues R525–S539 show a composition bias toward basic and acidic residues. 2 positions are modified to phosphothreonine: T599 and T611.

The protein belongs to the COM1/SAE2/CtIP family. Homotetramer; formed by antiparallel association of helical extensions protruding from the N-termini of two parallel coiled-coil dimers. Interacts with the MRN complex; the interaction links DNA sensing to resection. Interacts with samhd1. Post-translationally, phosphorylation at Thr-599 and Thr-611 promote interaction with nbn and recruitment to double-strand breaks (DSBs).

It is found in the nucleus. The protein localises to the chromosome. Endonuclease that cooperates with the MRE11-RAD50-NBN (MRN) complex in DNA-end resection, the first step of double-strand break (DSB) repair through the homologous recombination (HR) pathway. Functions downstream of the MRN complex and ATM, promotes ATR activation and its recruitment to DSBs in the S/G2 phase facilitating the generation of ssDNA. Specifically promotes the endonuclease activity of the MRN complex to clear DNA ends containing protein adducts: recruited to DSBs by nbn following phosphorylation, and promotes the endonuclease of mre11 to clear protein-DNA adducts and generate clean double-strand break ends. The sequence is that of DNA endonuclease RBBP8 (rbbp8) from Danio rerio (Zebrafish).